We begin with the raw amino-acid sequence, 239 residues long: Fatty acid metabolism regulator protein (239 aa).

The region spanning 6–74 (KGPASFAEKY…HGKPTQVNNF (69 aa)) is the HTH gntR-type domain. The H-T-H motif DNA-binding region spans 34-53 (ERELSELIGVTRTTLREVLQ).

As to quaternary structure, homodimer.

The protein localises to the cytoplasm. Multifunctional regulator of fatty acid metabolism. The protein is Fatty acid metabolism regulator protein of Shewanella frigidimarina (strain NCIMB 400).